A 1262-amino-acid polypeptide reads, in one-letter code: Histone-lysine N-methyltransferase eggless (1262 aa).

The disordered stretch occupies residues 1-194; that stretch reads MSGQPTAVDC…MEVDQDVEES (194 aa). Composition is skewed to basic and acidic residues over residues 26–41, 50–61, and 81–99; these read ASRE…KGEN, AAKDVEIEELTH, and APDE…KGEN. The segment covering 157–166 has biased composition (low complexity); the sequence is SSISSPTSES. Basic and acidic residues predominate over residues 167 to 179; that stretch reads FPEKDEKTNKENE. Serine 215 carries the phosphoserine modification. Threonine 217 carries the phosphothreonine modification. Residues 353 to 420 are a coiled coil; it reads EKSDFSKNKL…LEKVQTTADK (68 aa). Tudor domains follow at residues 529–602 and 629–686; these read RLTI…SEKV and QCTR…RETQ. The tract at residues 743-764 is disordered; that stretch reads SSAATPAGGRTNAGGVSTSNSA. The MBD domain occupies 818 to 884; it reads LDSYSPLAKP…DNFDFTPDLK (67 aa). Residues 946-1018 form the Pre-SET domain; sequence LCCDCEDDCS…NCLNRVVQFS (73 aa). Residues cysteine 948, cysteine 950, cysteine 954, cysteine 960, cysteine 962, cysteine 1000, cysteine 1004, cysteine 1006, and cysteine 1010 each coordinate Zn(2+). The 217-residue stretch at 1021–1237 folds into the SET domain; it reads MKLQVFKTSN…SGTELTWNYN (217 aa). S-adenosyl-L-methionine is bound by residues 1031-1033, aspartate 1069, and tyrosine 1071; that span reads RGW. Basic and acidic residues predominate over residues 1086-1097; it reads EGYESEVDHSDP. Positions 1086–1148 are disordered; it reads EGYESEVDHS…QSSELDSQER (63 aa). Over residues 1098–1113 the composition is skewed to acidic residues; the sequence is DAEEDNGGPDAEDDDD. Residues 1129–1141 show a composition bias toward low complexity; that stretch reads RSGSTQNSSTQSS. S-adenosyl-L-methionine-binding positions include arginine 1191 and 1194–1195; that span reads NH. Zn(2+) is bound by residues cysteine 1197, cysteine 1250, cysteine 1252, and cysteine 1257. The Post-SET domain occupies 1246 to 1262; that stretch reads KVLYCQCGAPNCRLRLL.

This sequence belongs to the class V-like SAM-binding methyltransferase superfamily. Histone-lysine methyltransferase family. Suvar3-9 subfamily. In terms of tissue distribution, expressed in ovary (at protein level).

It localises to the nucleus. It is found in the chromosome. It carries out the reaction L-lysyl(9)-[histone H3] + 3 S-adenosyl-L-methionine = N(6),N(6),N(6)-trimethyl-L-lysyl(9)-[histone H3] + 3 S-adenosyl-L-homocysteine + 3 H(+). In terms of biological role, histone methyltransferase that specifically trimethylates 'Lys-10' of histone H3 (H3K9me3) in ovary. H3K9me3 represents a specific tag for epigenetic transcriptional repression by recruiting Su(var)205/HP1 to methylated histones. Plays a central role during oogenesis. This is Histone-lysine N-methyltransferase eggless (egg) from Drosophila melanogaster (Fruit fly).